The primary structure comprises 505 residues: Lysine--tRNA ligase (505 aa).

Residues E415 and E422 each contribute to the Mg(2+) site.

The protein belongs to the class-II aminoacyl-tRNA synthetase family. As to quaternary structure, homodimer. Requires Mg(2+) as cofactor.

It localises to the cytoplasm. It carries out the reaction tRNA(Lys) + L-lysine + ATP = L-lysyl-tRNA(Lys) + AMP + diphosphate. This Xanthomonas oryzae pv. oryzae (strain MAFF 311018) protein is Lysine--tRNA ligase.